Reading from the N-terminus, the 962-residue chain is Putative primase C962R (962 aa).

The 169-residue stretch at glutamate 607–lysine 775 folds into the SF3 helicase domain. Glycine 636–threonine 643 contacts ATP.

Belongs to the asfivirus helicase C962R family.

The protein is Putative primase C962R of African swine fever virus (isolate Warthog/Namibia/Wart80/1980) (ASFV).